The chain runs to 319 residues: Free fatty acid receptor 3 (319 aa).

Residues 1–15 lie on the Extracellular side of the membrane; that stretch reads MDTSFFPGNHWLFFS. A helical membrane pass occupies residues 16 to 36; it reads VDLLVFLVGLPLNVMALVVFV. Topologically, residues 37–43 are cytoplasmic; sequence NKLRRRP. Residues 44 to 64 traverse the membrane as a helical segment; sequence VAVDLLLLNLTISDLLLLLFL. Topologically, residues 65–98 are extracellular; sequence PFRIVEAACGMKWILPFIFCPLSGFLFFTTIYLT. A disulfide bridge connects residues Cys84 and Cys165. Residues 99-119 traverse the membrane as a helical segment; that stretch reads SLFLMTVSIERFLSVAYPLWY. The Cytoplasmic segment spans residues 120 to 127; it reads KTRPRLAQ. Residues 128–148 form a helical membrane-spanning segment; it reads AGLVSGICWFLASAHCSVIYV. The Extracellular segment spans residues 149-183; the sequence is TEYWGNATYSQGTNGTCYLEFREDQLAILLPVRLE. The helical transmembrane segment at 184-206 threads the bilayer; sequence MAVVLFMVPLCITSYCYSRLVWI. The Cytoplasmic segment spans residues 207-218; that stretch reads LSQGASRRRRKR. A helical transmembrane segment spans residues 219–239; the sequence is VMGLLVATLLIFFVCFGPYNM. Topologically, residues 240–254 are extracellular; sequence SHVVGYVRGESPTWR. A helical membrane pass occupies residues 255 to 275; the sequence is SYVLLLSTLNSCIDPLVFYFS. Topologically, residues 276 to 319 are cytoplasmic; sequence SSKFQADFHQLLSRLIRACVPWTQEVSLELKVKNGEEPSKECPS.

It belongs to the G-protein coupled receptor 1 family. As to expression, expressed in the sympathetic nervous system.

Its subcellular location is the cell membrane. In terms of biological role, g protein-coupled receptor that is activated by a major product of dietary fiber digestion, the short chain fatty acids (SCFAs), and that plays a role in the regulation of whole-body energy homeostasis and in intestinal immunity. In omnivorous mammals, the short chain fatty acids acetate, propionate and butyrate are produced primarily by the gut microbiome that metabolizes dietary fibers. SCFAs serve as a source of energy but also act as signaling molecules. That G protein-coupled receptor is probably coupled to the pertussis toxin-sensitive, G(i/o)-alpha family of G proteins. Its activation results in the formation of inositol 1,4,5-trisphosphate, the mobilization of intracellular calcium, the phosphorylation of the MAPK3/ERK1 and MAPK1/ERK2 kinases and the inhibition of intracellular cAMP accumulation. Activated by SCFAs and by beta-hydroxybutyrate, a ketone body produced by the liver upon starvation, it inhibits N-type calcium channels and modulates the activity of sympathetic neurons through a signaling cascade involving the beta and gamma subunits of its coupled G protein, phospholipase C and MAP kinases. Thereby, it may regulate energy expenditure through the control of the sympathetic nervous system that controls for instance heart rate. Upon activation by SCFAs accumulating in the intestine, it may also signal to the brain via neural circuits which in turn would regulate intestinal gluconeogenesis. May also control the production of hormones involved in whole-body energy homeostasis. May for instance, regulate blood pressure through renin secretion. May also regulate secretion of the PYY peptide by enteroendocrine cells and control gut motility, intestinal transit rate, and the harvesting of energy from SCFAs produced by gut microbiota. May also indirectly regulate the production of LEP/Leptin, a hormone acting on the CNS to inhibit food intake, in response to the presence of short-chain fatty acids in the intestine. Finally, may also play a role in glucose homeostasis. Besides its role in energy homeostasis, may play a role in intestinal immunity. May mediate the activation of the inflammatory and immune response by SCFAs in the gut, regulating the rapid production of chemokines and cytokines by intestinal epithelial cells. The protein is Free fatty acid receptor 3 (Ffar3) of Rattus norvegicus (Rat).